An 86-amino-acid polypeptide reads, in one-letter code: Translation initiation factor IF-1 2 (86 aa).

The region spanning 1-72 (MAKEELLEME…SKGRITFRHI (72 aa)) is the S1-like domain.

It belongs to the IF-1 family. As to quaternary structure, component of the 30S ribosomal translation pre-initiation complex which assembles on the 30S ribosome in the order IF-2 and IF-3, IF-1 and N-formylmethionyl-tRNA(fMet); mRNA recruitment can occur at any time during PIC assembly.

It localises to the cytoplasm. One of the essential components for the initiation of protein synthesis. Stabilizes the binding of IF-2 and IF-3 on the 30S subunit to which N-formylmethionyl-tRNA(fMet) subsequently binds. Helps modulate mRNA selection, yielding the 30S pre-initiation complex (PIC). Upon addition of the 50S ribosomal subunit IF-1, IF-2 and IF-3 are released leaving the mature 70S translation initiation complex. This chain is Translation initiation factor IF-1 2, found in Polynucleobacter asymbioticus (strain DSM 18221 / CIP 109841 / QLW-P1DMWA-1) (Polynucleobacter necessarius subsp. asymbioticus).